Here is a 273-residue protein sequence, read N- to C-terminus: Proteasome subunit beta type-10 (273 aa).

M1 is modified (N-acetylmethionine). A propeptide spans 1 to 39 (removed in mature form); sequence MQKTVLEPQRGFSFENCERNAALQRALPGLRVPHARKTG. The active-site Nucleophile is T40. The residue at position 230 (S230) is a Phosphoserine.

The protein belongs to the peptidase T1B family. In terms of assembly, the 26S proteasome consists of a 20S proteasome core and two 19S regulatory subunits. The 20S proteasome core is composed of 28 subunits that are arranged in four stacked rings, resulting in a barrel-shaped structure. The two end rings are each formed by seven alpha subunits, and the two central rings are each formed by seven beta subunits. The catalytic chamber with the active sites is on the inside of the barrel. Component of the immunoproteasome, where it displaces the equivalent housekeeping subunit PSMB7. Component of the spermatoproteasome, a form of the proteasome specifically found in testis. In terms of processing, autocleaved. The resulting N-terminal Thr residue of the mature subunit is responsible for the nucleophile proteolytic activity.

The protein localises to the cytoplasm. It is found in the nucleus. The enzyme catalyses Cleavage of peptide bonds with very broad specificity.. Its function is as follows. The proteasome is a multicatalytic proteinase complex which is characterized by its ability to cleave peptides with Arg, Phe, Tyr, Leu, and Glu adjacent to the leaving group at neutral or slightly basic pH. The proteasome has an ATP-dependent proteolytic activity. This subunit is involved in antigen processing to generate class I binding peptides. The protein is Proteasome subunit beta type-10 (PSMB10) of Bos taurus (Bovine).